The sequence spans 118 residues: Autophagy-related protein 8 (118 aa).

The Phosphatidylethanolamine amidated glycine moiety is linked to residue G116. Positions 117-118 are cleaved as a propeptide — removed in mature form; it reads EA.

The protein belongs to the ATG8 family. Conjugation to phosphatidylethanolamine (PE) leads to homodimerization. Interacts with ATG1, ATG3, ATG4, ATG7 and ATG12. In terms of processing, the C-terminal Glu-117 and Ala-118 residues of ATG8 are removed by ATG4 to expose Gly-116 at the C-terminus. This Gly-116 forms then a thioester bond with the 'Cys-550' of ATG7 (E1-like activating enzyme) before being transferred to the 'Cys-244' of ATG3 (the specific E2 conjugating enzyme), in order to be finally amidated with phosphatidylethanolamine. This lipid modification anchors ATG8 to membranes and can be reversed by ATG4, releasing soluble ATG8.

It is found in the cytoplasmic vesicle. The protein localises to the cvt vesicle membrane. It localises to the autophagosome membrane. Its subcellular location is the vacuole membrane. Ubiquitin-like modifier involved in cytoplasm to vacuole transport (Cvt) vesicles and autophagosome formation. With ATG4, mediates the delivery of the vesicles and autophagosomes to the vacuole via the microtubule cytoskeleton. Required for selective autophagic degradation of the nucleus (nucleophagy) as well as for mitophagy which contributes to regulate mitochondrial quantity and quality by eliminating the mitochondria to a basal level to fulfill cellular energy requirements and preventing excess ROS production. Also participates in membrane fusion events that take place in the early secretory pathway. Also involved in endoplasmic reticulum-specific autophagic process and is essential for the survival of cells subjected to severe ER stress. The ATG8-PE conjugate mediates tethering between adjacent membranes and stimulates membrane hemifusion, leading to expansion of the autophagosomal membrane during autophagy. Moreover not only conjugation, but also subsequent ATG8-PE deconjugation is an important step required to facilitate multiple events during macroautophagy, and especially for efficient autophagosome biogenesis, the assembly of ATG9-containing tubulovesicular clusters into phagophores/autophagosomes, and for the disassembly of PAS-associated ATG components. Autophagy is required for proper vegetative growth, asexual/sexual reproduction, and full virulence. Autophagy is particularly involved in the biosynthesis of deoxynivalenol (DON), an important virulence determinant. The chain is Autophagy-related protein 8 from Gibberella zeae (strain ATCC MYA-4620 / CBS 123657 / FGSC 9075 / NRRL 31084 / PH-1) (Wheat head blight fungus).